Consider the following 578-residue polypeptide: Arginine--tRNA ligase (578 aa).

The short motif at 127–137 (PNLAKEMHVGH) is the 'HIGH' region element.

This sequence belongs to the class-I aminoacyl-tRNA synthetase family. As to quaternary structure, monomer.

The protein localises to the cytoplasm. The enzyme catalyses tRNA(Arg) + L-arginine + ATP = L-arginyl-tRNA(Arg) + AMP + diphosphate. The protein is Arginine--tRNA ligase of Pseudomonas putida (strain ATCC 47054 / DSM 6125 / CFBP 8728 / NCIMB 11950 / KT2440).